The sequence spans 542 residues: NAD-dependent deacetylase sir2D (542 aa).

Disordered stretches follow at residues 1-37 (MNKRSLENNELNEIQNNQNKNNNNKINKEIPSDNTPL) and 136-160 (ETSTSITNTSSTTTTSTSTTTTTTT). Positions 8–25 (NNELNEIQNNQNKNNNNK) are enriched in low complexity. Positions 165–193 (NETILLDILNNNKDEVDDEIQRIGNNVGN) form a coiled coil. The Deacetylase sirtuin-type domain occupies 283 to 542 (ATLDLSTFEK…VQDLLNKVKW (260 aa)). Residue H411 is the Proton acceptor of the active site. Residues C419, C422, C443, and C446 each contribute to the Zn(2+) site.

The protein belongs to the sirtuin family. Zn(2+) is required as a cofactor.

The catalysed reaction is N(6)-acetyl-L-lysyl-[protein] + NAD(+) + H2O = 2''-O-acetyl-ADP-D-ribose + nicotinamide + L-lysyl-[protein]. NAD-dependent deacetylase, which plays an important role in the regulation of transcriptional repression. The chain is NAD-dependent deacetylase sir2D (sir2D) from Dictyostelium discoideum (Social amoeba).